Reading from the N-terminus, the 233-residue chain is Proteasome subunit alpha (233 aa).

It belongs to the peptidase T1A family. In terms of assembly, the 20S proteasome core is composed of 14 alpha and 14 beta subunits that assemble into four stacked heptameric rings, resulting in a barrel-shaped structure. The two inner rings, each composed of seven catalytic beta subunits, are sandwiched by two outer rings, each composed of seven alpha subunits. The catalytic chamber with the active sites is on the inside of the barrel. Has a gated structure, the ends of the cylinder being occluded by the N-termini of the alpha-subunits. Is capped at one or both ends by the proteasome regulatory ATPase, PAN. Post-translationally, the N-terminus is blocked.

It localises to the cytoplasm. Its activity is regulated as follows. The formation of the proteasomal ATPase PAN-20S proteasome complex, via the docking of the C-termini of PAN into the intersubunit pockets in the alpha-rings, triggers opening of the gate for substrate entry. Interconversion between the open-gate and close-gate conformations leads to a dynamic regulation of the 20S proteasome proteolysis activity. Functionally, component of the proteasome core, a large protease complex with broad specificity involved in protein degradation. The T.acidophilum proteasome is able to cleave oligopeptides after Tyr, Leu, Phe, and to a lesser extent after Glu and Arg. Thus, displays chymotrypsin-like activity and low level of caspase-like and trypsin-like activities. This chain is Proteasome subunit alpha, found in Thermoplasma acidophilum (strain ATCC 25905 / DSM 1728 / JCM 9062 / NBRC 15155 / AMRC-C165).